The sequence spans 422 residues: 3-phosphoshikimate 1-carboxyvinyltransferase (422 aa).

Residues Lys21, Ser22, and Arg26 each contribute to the 3-phosphoshikimate site. Lys21 is a binding site for phosphoenolpyruvate. Positions 93 and 121 each coordinate phosphoenolpyruvate. Positions 166, 167, 168, 194, 310, and 337 each coordinate 3-phosphoshikimate. Gln168 provides a ligand contact to phosphoenolpyruvate. Residue Asp310 is the Proton acceptor of the active site. Residues Arg341, Arg382, and Lys407 each contribute to the phosphoenolpyruvate site.

This sequence belongs to the EPSP synthase family. In terms of assembly, monomer.

It localises to the cytoplasm. It carries out the reaction 3-phosphoshikimate + phosphoenolpyruvate = 5-O-(1-carboxyvinyl)-3-phosphoshikimate + phosphate. The protein operates within metabolic intermediate biosynthesis; chorismate biosynthesis. Its function is as follows. Catalyzes the transfer of the enolpyruvyl moiety of phosphoenolpyruvate (PEP) to the 5-hydroxyl of shikimate-3-phosphate (S3P) to produce enolpyruvyl shikimate-3-phosphate and inorganic phosphate. The polypeptide is 3-phosphoshikimate 1-carboxyvinyltransferase (Methanoculleus marisnigri (strain ATCC 35101 / DSM 1498 / JR1)).